The sequence spans 1104 residues: Extended synaptotagmin-1 (1104 aa).

At Met-1 the chain carries N-acetylmethionine. Topologically, residues 1 to 38 (MERSPGEGPSPSPMDQPSAPSDPTDQPPAAHAKPDPGS) are cytoplasmic. Residues 1–48 (MERSPGEGPSPSPMDQPSAPSDPTDQPPAAHAKPDPGSGGQPAGPGAA) form a disordered region. Positions 37 to 47 (GSGGQPAGPGA) are enriched in gly residues. Residues 39–59 (GGQPAGPGAAGEALAVLTSFG) traverse the membrane as a helical segment. Residues 60–62 (RRL) lie on the Lumenal side of the membrane. A helical transmembrane segment spans residues 63–83 (LVLIPVYLAGAVGLSVGFVLF). Over 84–1104 (GLALYLGWRR…LMDNKDKGSS (1021 aa)) the chain is Cytoplasmic. The stretch at 91-116 (WRRVRDEKERSLRAARQLLDDEEQLT) forms a coiled coil. An SMP-LTD domain is found at 135 to 313 (DVEKAEWLNK…LPNRLLVPLV (179 aa)). C2 domains lie at 312–433 (LVPD…DDWF), 460–580 (QVLQ…QLSS), 627–751 (SVDA…DEWL), and 777–899 (LEEV…TLSS). Ser-324 carries the post-translational modification Phosphoserine; by CDK5. Residues Lys-344, Asp-345, Asp-357, Asp-404, Asp-406, Asp-408, Asp-410, and Asp-411 each contribute to the Ca(2+) site. Residues 617 to 641 (VDSENPQRGSSVDAPPRPCHTTPDS) are disordered. Lys-817 is modified (N6-acetyllysine). Residues Ser-820 and Ser-941 each carry the phosphoserine modification. The interval 924–950 (SHSYSHSSSSLSEEPELSGGPPHITSS) is disordered. The segment covering 925–946 (HSYSHSSSSLSEEPELSGGPPH) has biased composition (low complexity). The residue at position 948 (Thr-948) is a Phosphothreonine. 2 positions are modified to phosphoserine: Ser-949 and Ser-963. The region spanning 971–1093 (PLGQVKLTLW…DLSQGVARWY (123 aa)) is the C2 5 domain. At Tyr-1009 the chain carries Phosphotyrosine. Residues 1018 to 1025 (KNRGTKRR) form a required for phosphatidylinositol 4,5-bisphosphate-dependent location at the cell membrane region. Position 1034 is a phosphoserine (Ser-1034).

It belongs to the extended synaptotagmin family. As to quaternary structure, interacts with ESYT2 and ESYT3. Interacts with ADGRD1; inhibiting the G-protein-coupled receptor activity of ADGRD1. Interaction with ADGRD1 is abolished when cytosolic calcium increases, relieving ADGRD1 G-protein-coupled receptor activity. Interacts (phosphorylated form) with SLC2A4. In terms of processing, phosphorylated on Ser residues in insulin-treated adipocytes (in vitro); this promotes interaction with SLC2A4. Widely expressed.

The protein resides in the endoplasmic reticulum membrane. It localises to the cell membrane. Binds calcium (via the C2 domains) and translocates to sites of contact between the endoplasmic reticulum and the cell membrane in response to increased cytosolic calcium levels. Helps tether the endoplasmic reticulum to the cell membrane and promotes the formation of appositions between the endoplasmic reticulum and the cell membrane. Acts as an inhibitor of ADGRD1 G-protein-coupled receptor activity in absence of cytosolic calcium. Binds glycerophospholipids in a barrel-like domain and may play a role in cellular lipid transport. This chain is Extended synaptotagmin-1, found in Homo sapiens (Human).